A 115-amino-acid chain; its full sequence is DNA-binding protein NP_4416A (115 aa).

Over residues 1-11 the composition is skewed to acidic residues; the sequence is MSGEPTDEDLE. The tract at residues 1–46 is disordered; that stretch reads MSGEPTDEDLEELRKKKMEQLKEQGGEGQSEAAEAQRQQAEAQKKA. The span at 12 to 25 shows a compositional bias: basic and acidic residues; that stretch reads ELRKKKMEQLKEQG. Over residues 29 to 41 the composition is skewed to low complexity; the sequence is QSEAAEAQRQQAE.

This sequence belongs to the PDCD5 family.

This is DNA-binding protein NP_4416A from Natronomonas pharaonis (strain ATCC 35678 / DSM 2160 / CIP 103997 / JCM 8858 / NBRC 14720 / NCIMB 2260 / Gabara) (Halobacterium pharaonis).